A 273-amino-acid chain; its full sequence is Formamidopyrimidine-DNA glycosylase (273 aa).

The active-site Schiff-base intermediate with DNA is the Pro-2. Catalysis depends on Glu-3, which acts as the Proton donor. Lys-58 serves as the catalytic Proton donor; for beta-elimination activity. DNA contacts are provided by His-92, Arg-111, and Arg-153. The FPG-type zinc-finger motif lies at 238–272 (RVYGREGQKCFNCSSTILKTKNSGRSTFYCKTCQY). Arg-262 serves as the catalytic Proton donor; for delta-elimination activity.

Belongs to the FPG family. In terms of assembly, monomer. Requires Zn(2+) as cofactor.

The catalysed reaction is Hydrolysis of DNA containing ring-opened 7-methylguanine residues, releasing 2,6-diamino-4-hydroxy-5-(N-methyl)formamidopyrimidine.. It carries out the reaction 2'-deoxyribonucleotide-(2'-deoxyribose 5'-phosphate)-2'-deoxyribonucleotide-DNA = a 3'-end 2'-deoxyribonucleotide-(2,3-dehydro-2,3-deoxyribose 5'-phosphate)-DNA + a 5'-end 5'-phospho-2'-deoxyribonucleoside-DNA + H(+). Functionally, involved in base excision repair of DNA damaged by oxidation or by mutagenic agents. Acts as a DNA glycosylase that recognizes and removes damaged bases. Has a preference for oxidized purines, such as 7,8-dihydro-8-oxoguanine (8-oxoG). Has AP (apurinic/apyrimidinic) lyase activity and introduces nicks in the DNA strand. Cleaves the DNA backbone by beta-delta elimination to generate a single-strand break at the site of the removed base with both 3'- and 5'-phosphates. This Rickettsia canadensis (strain McKiel) protein is Formamidopyrimidine-DNA glycosylase.